The sequence spans 125 residues: Large-conductance mechanosensitive channel (125 aa).

3 consecutive transmembrane segments (helical) span residues 19 to 39, 42 to 62, and 67 to 87; these read VGVIIGAAFTAIVKSLVSNLI, LIGIFLGKIDLSNLVFSIGSA, and GSFLNEVINFLIIAFVVFLMV.

The protein belongs to the MscL family. As to quaternary structure, homopentamer.

Its subcellular location is the cell membrane. Functionally, channel that opens in response to stretch forces in the membrane lipid bilayer. May participate in the regulation of osmotic pressure changes within the cell. This chain is Large-conductance mechanosensitive channel, found in Limosilactobacillus fermentum (strain NBRC 3956 / LMG 18251) (Lactobacillus fermentum).